The following is a 219-amino-acid chain: Holliday junction branch migration complex subunit RuvA (219 aa).

Residues 1–67 (MIGWLRGERI…DDGSSLFGFP (67 aa)) form a domain I region. The segment at 68-146 (DRRERDLFRV…AWSAEKNSDH (79 aa)) is domain II. Positions 147–161 (SDLSLVDRSDLKSLP) are flexible linker. A domain III region spans residues 162-219 (IEPDPLQDLQLTLSTLGYEDLEIRRAMRAVATGEEVPAANDGDGWLRASLRWLNRPSA).

Belongs to the RuvA family. Homotetramer. Forms an RuvA(8)-RuvB(12)-Holliday junction (HJ) complex. HJ DNA is sandwiched between 2 RuvA tetramers; dsDNA enters through RuvA and exits via RuvB. An RuvB hexamer assembles on each DNA strand where it exits the tetramer. Each RuvB hexamer is contacted by two RuvA subunits (via domain III) on 2 adjacent RuvB subunits; this complex drives branch migration. In the full resolvosome a probable DNA-RuvA(4)-RuvB(12)-RuvC(2) complex forms which resolves the HJ.

The protein resides in the cytoplasm. Functionally, the RuvA-RuvB-RuvC complex processes Holliday junction (HJ) DNA during genetic recombination and DNA repair, while the RuvA-RuvB complex plays an important role in the rescue of blocked DNA replication forks via replication fork reversal (RFR). RuvA specifically binds to HJ cruciform DNA, conferring on it an open structure. The RuvB hexamer acts as an ATP-dependent pump, pulling dsDNA into and through the RuvAB complex. HJ branch migration allows RuvC to scan DNA until it finds its consensus sequence, where it cleaves and resolves the cruciform DNA. In Synechococcus sp. (strain CC9311), this protein is Holliday junction branch migration complex subunit RuvA.